A 439-amino-acid polypeptide reads, in one-letter code: UDP-N-acetylmuramoylalanine--D-glutamate ligase (439 aa).

116–122 contributes to the ATP binding site; sequence GSNGKTT.

Belongs to the MurCDEF family.

It localises to the cytoplasm. The catalysed reaction is UDP-N-acetyl-alpha-D-muramoyl-L-alanine + D-glutamate + ATP = UDP-N-acetyl-alpha-D-muramoyl-L-alanyl-D-glutamate + ADP + phosphate + H(+). The protein operates within cell wall biogenesis; peptidoglycan biosynthesis. In terms of biological role, cell wall formation. Catalyzes the addition of glutamate to the nucleotide precursor UDP-N-acetylmuramoyl-L-alanine (UMA). The chain is UDP-N-acetylmuramoylalanine--D-glutamate ligase from Shewanella oneidensis (strain ATCC 700550 / JCM 31522 / CIP 106686 / LMG 19005 / NCIMB 14063 / MR-1).